The chain runs to 172 residues: Centrin-2 (172 aa).

Residues 1–14 (MASNFKKTTMASSA) are compositionally biased toward polar residues. Residues 1–31 (MASNFKKTTMASSAQRKRMSPKPELTEDQKQ) form a disordered region. Alanine 2 bears the N-acetylalanine mark. Residues 2 to 25 (ASNFKKTTMASSAQRKRMSPKPEL) form a required for self-assembly region. At serine 20 the chain carries Phosphoserine. Residue lysine 22 forms a Glycyl lysine isopeptide (Lys-Gly) (interchain with G-Cter in SUMO2) linkage. A Phosphothreonine modification is found at threonine 26. 4 consecutive EF-hand domains span residues 28–63 (DQKQ…LGFE), 64–99 (PKKE…KMSE), 101–136 (DTKE…LGEN), and 137–172 (LTDE…TSLY). Ca(2+)-binding residues include aspartate 41, aspartate 43, threonine 45, threonine 47, and glutamate 52. Ca(2+) is bound by residues aspartate 150, aspartate 152, aspartate 154, glutamate 156, and glutamate 161.

The protein belongs to the centrin family. Monomer. Homooligomer. Interacts with CCP110, SFI1. Component of the XPC complex composed of XPC, RAD23B and CETN2. Component of the nuclear pore complex (NPC)-associated TREX-2 complex (transcription and export complex 2), composed of at least GANP, 2 copies of ENY2, PCID2, SEM1/DSS1, and either centrin CETN2 or centrin CETN3. The TREX-2 complex also associates with ALYREF/ALY and with the nucleoporin NUP153. Interacts with USP49. Forms a microtubule-associated complex with POC5, POC1B and FAM161A. Interacts with CCDC15. Ubiquitously expressed in all adult tissues tested, with strongest expression in brain, spleen, kidney, small intestine and ovary. Also expressed in the NIH 3T3 fibroblast cell line and peripheral blood lymphocytes.

Its subcellular location is the cytoplasm. It localises to the cytoskeleton. The protein localises to the microtubule organizing center. It is found in the centrosome. The protein resides in the centriole. Its subcellular location is the nucleus. It localises to the nucleus envelope. The protein localises to the nuclear pore complex. In terms of biological role, plays a fundamental role in microtubule organizing center structure and function. Required for centriole duplication and correct spindle formation. Has a role in regulating cytokinesis and genome stability via cooperation with CALM1 and CCP110. Involved in global genome nucleotide excision repair (GG-NER) by acting as component of the XPC complex. Cooperatively with Rad23b appears to stabilize Xpc. In vitro, stimulates DNA binding of the Xpc:Rad23b dimer. Functionally, the XPC complex is proposed to represent the first factor bound at the sites of DNA damage and together with other core recognition factors, Xpa, RPA and the TFIIH complex, is part of the pre-incision (or initial recognition) complex. The XPC complex recognizes a wide spectrum of damaged DNA characterized by distortions of the DNA helix such as single-stranded loops, mismatched bubbles or single-stranded overhangs. The orientation of XPC complex binding appears to be crucial for inducing a productive NER. XPC complex is proposed to recognize and to interact with unpaired bases on the undamaged DNA strand which is followed by recruitment of the TFIIH complex and subsequent scanning for lesions in the opposite strand in a 5'-to-3' direction by the NER machinery. Cyclobutane pyrimidine dimers (CPDs) which are formed upon UV-induced DNA damage esacpe detection by the XPC complex due to a low degree of structural perurbation. Instead they are detected by the UV-DDB complex which in turn recruits and cooperates with the XPC complex in the respective DNA repair. Its function is as follows. As a component of the TREX-2 complex, involved in the export of mRNAs to the cytoplasm through the nuclear pores. The sequence is that of Centrin-2 (Cetn2) from Mus musculus (Mouse).